A 62-amino-acid chain; its full sequence is Snaclec aspercetin subunit beta (62 aa).

Residues cysteine 2 and cysteine 13 are joined by a disulfide bond. Residues 9–62 form the C-type lectin domain; sequence YEGHCYRVFKPPKDWADAERFCSQQAKGGHLVSIERFGREDFVSNLITKNLQRG.

Belongs to the snaclec family. As to quaternary structure, heterodimer; disulfide-linked. Expressed by the venom gland.

It localises to the secreted. Functionally, snaclec that binds to von Willebrand factor (VWF) and induces its interaction with GPIbalpha (GP1BA) (via the vWF A1 domain), resulting in platelet aggregation. Intramuscular and intravenous injections in mice induce a dose-dependent drop in platelet count (thrombocytopenia). Pretreatment by intravenous injection by this protein in mice potentiates the hemorrhagic lesion in the skin provoked by the metalloproteinase BaP1 intradermally injected. This result is not observed when both BaP1 and this protein are injected simultaneously. The chain is Snaclec aspercetin subunit beta from Bothrops asper (Terciopelo).